A 204-amino-acid chain; its full sequence is ATP phosphoribosyltransferase (204 aa).

The protein belongs to the ATP phosphoribosyltransferase family. Short subfamily. In terms of assembly, heteromultimer composed of HisG and HisZ subunits.

It is found in the cytoplasm. The enzyme catalyses 1-(5-phospho-beta-D-ribosyl)-ATP + diphosphate = 5-phospho-alpha-D-ribose 1-diphosphate + ATP. Its pathway is amino-acid biosynthesis; L-histidine biosynthesis; L-histidine from 5-phospho-alpha-D-ribose 1-diphosphate: step 1/9. In terms of biological role, catalyzes the condensation of ATP and 5-phosphoribose 1-diphosphate to form N'-(5'-phosphoribosyl)-ATP (PR-ATP). Has a crucial role in the pathway because the rate of histidine biosynthesis seems to be controlled primarily by regulation of HisG enzymatic activity. The sequence is that of ATP phosphoribosyltransferase from Leptospira biflexa serovar Patoc (strain Patoc 1 / Ames).